Consider the following 358-residue polypeptide: DnaJ homolog subfamily C member 18 (358 aa).

Residues 82–146 (NYYEILGVSR…DKRLRYDEYG (65 aa)) enclose the J domain. Residues 228 to 248 (AFIQLLPVLVIVIISVITQLL) form a helical membrane-spanning segment.

It is found in the endoplasmic reticulum membrane. The sequence is that of DnaJ homolog subfamily C member 18 (DNAJC18) from Bos taurus (Bovine).